A 749-amino-acid polypeptide reads, in one-letter code: MTGDPPERRSNGDRLPAERPPSNEGQTPPRKPGRNEPGSPPDWRVTPAPDGRGTPRRGRNGGGMRPFRFPGGRWGILVFILVLLGLNWWISSNALAPSERVRVPYSPNFIQQVRDGNVKEISSTGASIQGDFRADVTYPPKDDKDSVTAKKFSTEVPAFADTDELSKLLQDNDVTVNASPADNGPSLLVSILLGFGPVILIIALFVFLSRRMAGAAGGGMMSFGRSRARRSEGGEAQVTFRDVAGIDEAEAELNEIVDFLKNPQKYQRLGGKIPKGVLLSGQPGTGKTLLARAVAGEAGVPFFSMSASEFVEMIVGVGASRVRDLFRQAKEAAPAIIFIDELDAIGRARGGGRGSFGGNDEREQTLNQILTEMDGFEPTTAVIVIAATNRPEILDAALLRPGRFDRRVTVAAPDRNGRLMILKVHTRSVPLADDVDLESIASSTPGMVGADLANLVNEAALLAARRGHVKVTNSDVADALEKVVLGAERKVMMSDDDRRRTAYHESGHAIVGMLTAGADPVRKVSIIPRGQALGVTFSSPDADKYNYDERYLVGKIKVALGGRVAEEIVFGDLTTGAESDIQQLTGIARQMVGRWGMSRAIGPIAVLPSEGNGPLLPGVAETSESTQRLVDEEVRRIVDSAHAEVTRLLREHRANLDSLVAGLLDQETLDEADAYEAAGLEHMRPERVEPPAPRPSRRDGGRSVAAGPVPHGLEAPERPAQIAAPGADEPEPPTNGSGELGGSVRAGDA.

Basic and acidic residues predominate over residues 1 to 17; sequence MTGDPPERRSNGDRLPA. The tract at residues 1–67 is disordered; sequence MTGDPPERRS…GRNGGGMRPF (67 aa). Residues 1-75 lie on the Cytoplasmic side of the membrane; that stretch reads MTGDPPERRS…PFRFPGGRWG (75 aa). A helical membrane pass occupies residues 76–96; sequence ILVFILVLLGLNWWISSNALA. Topologically, residues 97 to 186 are extracellular; that stretch reads PSERVRVPYS…NASPADNGPS (90 aa). Residues 187-207 traverse the membrane as a helical segment; sequence LLVSILLGFGPVILIIALFVF. Residues 208-749 lie on the Cytoplasmic side of the membrane; sequence LSRRMAGAAG…LGGSVRAGDA (542 aa). 281–288 contacts ATP; sequence GQPGTGKT. Residue H504 participates in Zn(2+) binding. The active site involves E505. H508 and D580 together coordinate Zn(2+). The span at 679–689 shows a compositional bias: basic and acidic residues; the sequence is GLEHMRPERVE. The interval 679-749 is disordered; it reads GLEHMRPERV…LGGSVRAGDA (71 aa).

It in the central section; belongs to the AAA ATPase family. This sequence in the C-terminal section; belongs to the peptidase M41 family. In terms of assembly, homohexamer. It depends on Zn(2+) as a cofactor.

The protein localises to the cell membrane. Functionally, acts as a processive, ATP-dependent zinc metallopeptidase for both cytoplasmic and membrane proteins. Plays a role in the quality control of integral membrane proteins. This Conexibacter woesei (strain DSM 14684 / CCUG 47730 / CIP 108061 / JCM 11494 / NBRC 100937 / ID131577) protein is ATP-dependent zinc metalloprotease FtsH 3.